Reading from the N-terminus, the 124-residue chain is Membrane magnesium transporter 2 (124 aa).

A topological domain (cytoplasmic) is located at residue Met-1. The helical transmembrane segment at 2–22 threads the bilayer; sequence VAWLWKVLVGVGLSALAHAAF. Residues 23–44 are Lumenal-facing; the sequence is SAAQHRSHTRLAEMKYEPLPTD. A helical transmembrane segment spans residues 45–65; it reads IVLQTLLAFALTCYGVVHTAG. At 66–124 the chain is on the cytoplasmic side; it reads DFRDRDATSELKNVTFDTLRNRPSFYVFQHSGSSLLQPSDTTRSSNLNVPSSDDIRLKF.

This sequence belongs to the membrane magnesium transporter (TC 1.A.67) family.

It is found in the golgi apparatus membrane. The protein resides in the early endosome membrane. Its function is as follows. Mediates Mg(2+) transport. The protein is Membrane magnesium transporter 2 of Rattus norvegicus (Rat).